A 550-amino-acid chain; its full sequence is Arginine--tRNA ligase (550 aa).

The 'HIGH' region signature appears at 130–140; sequence ANPTGPIHLGG.

Belongs to the class-I aminoacyl-tRNA synthetase family. Monomer.

The protein localises to the cytoplasm. It catalyses the reaction tRNA(Arg) + L-arginine + ATP = L-arginyl-tRNA(Arg) + AMP + diphosphate. This chain is Arginine--tRNA ligase, found in Rhodococcus erythropolis (strain PR4 / NBRC 100887).